Here is a 312-residue protein sequence, read N- to C-terminus: Tumor necrosis factor receptor type 1-associated DEATH domain protein (312 aa).

The short motif at 147–163 (LRDEELAELEDALRNLK) is the Nuclear export signal element. The tract at residues 170–195 (GGDGEVASAPLQPPVPSLSEVKPPPP) is disordered. Residues 179 to 289 (PLQPPVPSLS…ATLQRLVEAL (111 aa)) enclose the Death domain. Residues 180–195 (LQPPVPSLSEVKPPPP) are compositionally biased toward pro residues. The interval 222 to 289 (FARSVGLKWR…ATLQRLVEAL (68 aa)) is interaction with KRT14 and KRT18. Positions 231–244 (RKVGRSLQRGCRAL) match the Nuclear localization signal motif. (Microbial infection) N-beta-linked (GlcNAc) arginine glycans are attached at residues R235 and R245.

Stimulation of TNF-alpha receptor TNFRSF1A leads to the formation of two distinct signaling complexes. Plasma membrane-bound complex I is composed of TNFRSF1A, TRADD, RIPK1, TRAF2 and BIRC2/c-IAP1 or BIRC3 which interacts with CHUCK/IKK-alpha, IKBKB/IKK-beta and IKBKG/IKK-gamma promoting cell survival. Subsequently, TRADD, RIPK1 and TRAF2 dissociate from TNFRSF1A and form cytoplasmic complex II with FADD and caspase CASP8 promoting cell apoptosis. Within complex I, interacts with TNFRSF1A/TNFR1, TRAF2 and kinase RIPK1. Within complex I, interacts with TRPC4AP; the interaction promotes NF-kappa B activation. UXT1 associates with complex I; the interaction prevents the formation of complex II. Within complex I Interacts with scaffold protein DAB2IP. Interacts with autophagy receptor SQSTM1. Interacts with E3 ligase TRIP12. Interacts with kinase HIPK2. Interacts with keratin KRT14. Interacts with keratin KRT18. Interacts with keratins KRT16 and KRT17. Interacts with FADD. Interacts with TOMM70. Interacts with TMC8; the interaction impairs the formation of complex I and facilites complex II formation. In terms of processing, (Microbial infection) Glycosylated at Arg-235 by enteropathogenic E.coli protein NleB1, C.rodentium protein NleB and S.typhimurium proteins Ssek1 and Ssek3: arginine GlcNAcylation prevents homotypic/heterotypic death domain interactions and assembly of the oligomeric TNFRSF1A/TNFR1 complex, thereby disrupting TNF signaling. In terms of tissue distribution, found in all examined tissues.

Its subcellular location is the nucleus. It is found in the cytoplasm. The protein resides in the cytoskeleton. Adapter molecule for TNFRSF1A/TNFR1 that specifically associates with the cytoplasmic domain of activated TNFRSF1A/TNFR1 mediating its interaction with FADD. Overexpression of TRADD leads to two major TNF-induced responses, apoptosis and activation of NF-kappa-B. The nuclear form acts as a tumor suppressor by preventing ubiquitination and degradation of isoform p19ARF/ARF of CDKN2A by TRIP12: acts by interacting with TRIP12, leading to disrupt interaction between TRIP12 and isoform p19ARF/ARF of CDKN2A. This Homo sapiens (Human) protein is Tumor necrosis factor receptor type 1-associated DEATH domain protein.